The following is a 552-amino-acid chain: Hyaluronan synthase 2 (552 aa).

At 1–11 (MHCERFLCILR) the chain is on the cytoplasmic side. The chain crosses the membrane as a helical span at residues 12-32 (IIGTTLFGVSLLLGITAAYIV). Residues 33–45 (GYQFIQTDNYYFS) are Extracellular-facing. Residues 46–66 (FGLYGAFLASHLIIQSLFAFL) traverse the membrane as a helical segment. Over 67-374 (EHRKMKKSLE…NAMWFHKHHL (308 aa)) the chain is Cytoplasmic. A Phosphothreonine modification is found at Thr-110. Lys-190 is covalently cross-linked (Glycyl lysine isopeptide (Lys-Gly) (interchain with G-Cter in ubiquitin)). An O-linked (GlcNAc) serine glycan is attached at Ser-221. Thr-328 carries the phosphothreonine modification. A helical transmembrane segment spans residues 375-395 (WMTYEAVITGFFPFFLIATVI). Residues 396–402 (QLFYRGK) lie on the Extracellular side of the membrane. The helical transmembrane segment at 403-423 (IWNTLLFLLTVQLVGLIKSSF) threads the bilayer. Residues 424 to 429 (ASCLRG) lie on the Cytoplasmic side of the membrane. A helical membrane pass occupies residues 430–450 (NIVMVFMSLYSVLYMSSLLPA). Over 451–475 (KMFAIATINKAGWGTSGRKTIVVNF) the chain is Extracellular. The helical transmembrane segment at 476-496 (IGLIPVSVWFTILLGGVIFTI) threads the bilayer. The Cytoplasmic segment spans residues 497–510 (YKESKKPFSESKQT). The helical transmembrane segment at 511 to 531 (VLIVGTLLYACYWVMLLTLYV) threads the bilayer. The Extracellular segment spans residues 532–552 (VLINKCGRRKKGQQYDMVLDV).

The protein belongs to the NodC/HAS family. Homodimer; dimerization promotes enzymatic activity. Forms heterodimer with HAS3. Forms heterodimer with HAS1. Requires Mg(2+) as cofactor. Post-translationally, phosphorylation at Thr-328 is essential for hyaluronan synthase activity. O-GlcNAcylation at Ser-221 increases the stability of HAS2 and plasma membrane localization. In terms of processing, ubiquitination at Lys-190; this ubiquitination is essential for hyaluronan synthase activity and homo- or hetero-oligomerization. Can also be poly-ubiquitinated. Deubiquitinated by USP17 and USP4. USP17 efficiently removes 'Lys-63'- and 'Lys-48'-linked polyubiquitin chains, whereas USP4 preferentially removes monoubiquitination and, partially, both 'Lys-63'- and 'Lys-48'-linked polyubiquitin chain. As to expression, expressed in corneal endothelial cells.

It is found in the cell membrane. The protein resides in the endoplasmic reticulum membrane. It localises to the vesicle. Its subcellular location is the golgi apparatus membrane. The protein localises to the lysosome. The enzyme catalyses [hyaluronan](n) + UDP-N-acetyl-alpha-D-glucosamine = N-acetyl-beta-D-glucosaminyl-(1-&gt;4)-[hyaluronan](n) + UDP + H(+). The catalysed reaction is N-acetyl-beta-D-glucosaminyl-(1-&gt;4)-[hyaluronan](n) + UDP-alpha-D-glucuronate = [hyaluronan](n+1) + UDP + H(+). Its pathway is glycan biosynthesis; hyaluronan biosynthesis. Functionally, catalyzes the addition of GlcNAc or GlcUA monosaccharides to the nascent hyaluronan polymer. Therefore, it is essential to hyaluronan synthesis a major component of most extracellular matrices that has a structural role in tissues architectures and regulates cell adhesion, migration and differentiation. This is one of three isoenzymes responsible for cellular hyaluronan synthesis and it is particularly responsible for the synthesis of high molecular mass hyaluronan. The polypeptide is Hyaluronan synthase 2 (HAS2) (Bos taurus (Bovine)).